We begin with the raw amino-acid sequence, 564 residues long: Keratin, type II cytoskeletal 6C (564 aa).

Over residues 1–11 (MASTSTTIRSH) the composition is skewed to low complexity. The disordered stretch occupies residues 1–23 (MASTSTTIRSHSSSRRGFSANSA). A2 bears the N-acetylalanine mark. Residues 2–162 (ASTSTTIRSH…DPAIQRVRAE (161 aa)) form a head region. A Phosphoserine modification is found at S60. Positions 163-198 (EREQIKTLNNKFASFIDKVRFLEQQNKVLDTKWTLL) are coil 1A. The IF rod domain occupies 163–476 (EREQIKTLNN…KLLEGEECRL (314 aa)). The interval 199–217 (QEQGTKTVRQNLEPLFEQY) is linker 1. Residues 218–309 (INNLRRQLDS…ALYDAELSQM (92 aa)) are coil 1B. Residues 310-333 (QTHISDTSVVLSMDNNRNLDLDSI) form a linker 12 region. The tract at residues 334 to 472 (IAEVKAQYEE…ATYRKLLEGE (139 aa)) is coil 2. The tail stretch occupies residues 473–564 (ECRLNGEGVG…SSSSRKSYKH (92 aa)).

It belongs to the intermediate filament family. Heterodimer of a type I and a type II keratin. KRT6 isomers associate with KRT16 and/or KRT17. As to expression, constitutively expressed in distinct types of epithelia such as those in oral mucosa, esophagus, papillae of tongue and hair follicle outer root sheath.

The sequence is that of Keratin, type II cytoskeletal 6C (KRT6C) from Homo sapiens (Human).